Here is a 257-residue protein sequence, read N- to C-terminus: Adenylate kinase (257 aa).

52–57 (GAGKGT) contributes to the ATP binding site. The segment at 72 to 101 (ATGDMLRSQVAKKTELGKEAKKIMDQGGLV) is NMP. AMP-binding positions include Thr-73, Arg-78, 99–101 (GLV), 128–131 (GFPR), and Gln-135. An LID region spans residues 169–206 (GRLVHPASGRSYHKIFNPPKNEMLDDITGEPLIQRSDD). Residues Arg-170 and 179 to 180 (SY) contribute to the ATP site. 2 residues coordinate AMP: Arg-203 and Arg-214. Gln-242 serves as a coordination point for ATP.

It belongs to the adenylate kinase family. AK2 subfamily. In terms of assembly, monomer.

It localises to the cytoplasm. The protein localises to the cytosol. Its subcellular location is the mitochondrion intermembrane space. It carries out the reaction AMP + ATP = 2 ADP. Catalyzes the reversible transfer of the terminal phosphate group between ATP and AMP. Plays an important role in cellular energy homeostasis and in adenine nucleotide metabolism. Adenylate kinase activity is critical for regulation of the phosphate utilization and the AMP de novo biosynthesis pathways. This Aspergillus clavatus (strain ATCC 1007 / CBS 513.65 / DSM 816 / NCTC 3887 / NRRL 1 / QM 1276 / 107) protein is Adenylate kinase (adk1).